The following is a 700-amino-acid chain: MNPNNTGTIEINGKEYNTFTEPPVAMAQERAKTSFPVREMTYFLDGGEKNTLKNEQIMEEIERDPLFNNDNYYDLNKEQIRELTMERVAKLSLFVRDQPEDDIKKRFALIGIADMGTYTRLGVHYGLFFGAVRGTGTAEQFGHWISKGAGDLRKFYGCFSMTELGHGSNLAGLETTAIYDEETDEFIINTPHIAATKWWIGGAAHTATHTVVFARLIVKGKDYGVKTFVVQLRNINDHSLKVGISIGDIGKKMGRDGIDNGWIQFTNVRIPRQNLLMKYTKVDREGNVTQPPLAQLTYGSLITGRVSMASDSHQVGKRFITIALRYACIRRQFSTTPGQPETKIIDYPYHQRRLLPLLAYVYALKMTADEVGALFSRTMLKMDDLKPDDKAGLNEVVSDVKELFSVSAGLKAFSTWACADVIDKTRQACGGHGYSGYNGFGQAYADWVVQCTWEGDNNILTLSAGRALIQSAVALRKGEPVGNAVSYLKRYKDLANAKLNGRSLTDPKVLVEAWEVAAGNIINRATDQYEKLIGEGLNADQAFEVLSQQRFQAAKVHTRRHLIAAFFSRIDTEAGEAIKQPLLNLALLFALWSIEEDSGLFLREGFLEPKDIDTVTELVNKYCTTVREEVIGYTDAFNLSDYFINAPIGCYDGDAYRHYFQKVNEQNPARDPRPPYYASTLKPFLFREEEDDDICELDEE.

Belongs to the acyl-CoA oxidase family. As to quaternary structure, heteropentamer composed of five different subunits. The cofactor is FAD.

The protein resides in the peroxisome. The catalysed reaction is a 2,3-saturated acyl-CoA + O2 = a (2E)-enoyl-CoA + H2O2. It functions in the pathway lipid metabolism; peroxisomal fatty acid beta-oxidation. Oxidizes strain chain acyl-CoAs with a chain length of 10 to 14 carbons. Also active toward the 2S isomers of acyl-CoA-esters containing a 2-methyl group. The chain is Acyl-coenzyme A oxidase 2 (POX2) from Yarrowia lipolytica (strain CLIB 122 / E 150) (Yeast).